A 483-amino-acid polypeptide reads, in one-letter code: Aspartyl/glutamyl-tRNA(Asn/Gln) amidotransferase subunit B (483 aa).

Belongs to the GatB/GatE family. GatB subfamily. Heterotrimer of A, B and C subunits.

It catalyses the reaction L-glutamyl-tRNA(Gln) + L-glutamine + ATP + H2O = L-glutaminyl-tRNA(Gln) + L-glutamate + ADP + phosphate + H(+). It carries out the reaction L-aspartyl-tRNA(Asn) + L-glutamine + ATP + H2O = L-asparaginyl-tRNA(Asn) + L-glutamate + ADP + phosphate + 2 H(+). Functionally, allows the formation of correctly charged Asn-tRNA(Asn) or Gln-tRNA(Gln) through the transamidation of misacylated Asp-tRNA(Asn) or Glu-tRNA(Gln) in organisms which lack either or both of asparaginyl-tRNA or glutaminyl-tRNA synthetases. The reaction takes place in the presence of glutamine and ATP through an activated phospho-Asp-tRNA(Asn) or phospho-Glu-tRNA(Gln). This chain is Aspartyl/glutamyl-tRNA(Asn/Gln) amidotransferase subunit B, found in Rickettsia conorii (strain ATCC VR-613 / Malish 7).